A 695-amino-acid chain; its full sequence is Probable rhamnogalacturonate lyase C (695 aa).

The signal sequence occupies residues Met1–Ala21. N-linked (GlcNAc...) asparagine glycans are attached at residues Asn28, Asn96, Asn118, Asn144, Asn199, Asn285, Asn532, and Asn638.

It belongs to the polysaccharide lyase 4 family.

It localises to the secreted. It catalyses the reaction Endotype eliminative cleavage of L-alpha-rhamnopyranosyl-(1-&gt;4)-alpha-D-galactopyranosyluronic acid bonds of rhamnogalacturonan I domains in ramified hairy regions of pectin leaving L-rhamnopyranose at the reducing end and 4-deoxy-4,5-unsaturated D-galactopyranosyluronic acid at the non-reducing end.. Functionally, pectinolytic enzymes consist of four classes of enzymes: pectin lyase, polygalacturonase, pectin methylesterase and rhamnogalacturonase. Degrades the rhamnogalacturonan I (RG-I) backbone of pectin. This chain is Probable rhamnogalacturonate lyase C (rglC), found in Aspergillus oryzae (strain ATCC 42149 / RIB 40) (Yellow koji mold).